A 436-amino-acid chain; its full sequence is Protein FAM83A (436 aa).

The DUF1669 stretch occupies residues 1–298 (MSRSRHVGKI…LYASSKPLMG (298 aa)). The disordered stretch occupies residues 73 to 95 (AQAKEPPDAPDSAGGAESGPRGL). Phosphoserine occurs at positions 301, 329, 350, and 359. A disordered region spans residues 302 to 371 (PRLVAPFQPN…APIPPTVPRL (70 aa)). Positions 321 to 349 (LSGTSDSASDRTSSNPFSSLSTGSNAHNQ) are enriched in polar residues. Positions 350-359 (SLSTSSGPSS) are enriched in low complexity.

This sequence belongs to the FAM83 family. As to quaternary structure, directly interacts (via DUF1669) with casein kinase isoforms CSNK1A1, CSNK1A1L, CSNK1D and CSNK1E. Post-translationally, may be phosphorylated upon EGFR activation. As to expression, widely expressed, with relatively higher expression levels in adipose tissues, especially in epididymal and inguinal white adipose tissue (at protein level).

The protein resides in the cytoplasm. It is found in the mitochondrion. Its function is as follows. Involved in mitochondrial maintenance during adipogenesis. May be acting by playing a role in the maintenance of normal mitochondrial function. The polypeptide is Protein FAM83A (Mus musculus (Mouse)).